We begin with the raw amino-acid sequence, 118 residues long: SPbeta prophage-derived uncharacterized protein YoqR (118 aa).

The polypeptide is SPbeta prophage-derived uncharacterized protein YoqR (yoqR) (Bacillus subtilis (strain 168)).